A 422-amino-acid chain; its full sequence is Serine--tRNA ligase (422 aa).

Residue Thr238–Glu240 coordinates L-serine. Residue Arg269–Glu271 participates in ATP binding. Position 292 (Glu292) interacts with L-serine. Residue Glu356–Ser359 participates in ATP binding. Ser390 contacts L-serine.

It belongs to the class-II aminoacyl-tRNA synthetase family. Type-1 seryl-tRNA synthetase subfamily. In terms of assembly, homodimer. The tRNA molecule binds across the dimer.

Its subcellular location is the cytoplasm. It carries out the reaction tRNA(Ser) + L-serine + ATP = L-seryl-tRNA(Ser) + AMP + diphosphate + H(+). The catalysed reaction is tRNA(Sec) + L-serine + ATP = L-seryl-tRNA(Sec) + AMP + diphosphate + H(+). It participates in aminoacyl-tRNA biosynthesis; selenocysteinyl-tRNA(Sec) biosynthesis; L-seryl-tRNA(Sec) from L-serine and tRNA(Sec): step 1/1. Catalyzes the attachment of serine to tRNA(Ser). Is also able to aminoacylate tRNA(Sec) with serine, to form the misacylated tRNA L-seryl-tRNA(Sec), which will be further converted into selenocysteinyl-tRNA(Sec). This Helicobacter hepaticus (strain ATCC 51449 / 3B1) protein is Serine--tRNA ligase.